We begin with the raw amino-acid sequence, 94 residues long: Mobilization protein C (94 aa).

In terms of assembly, interacts with MobA and MobB to form the relaxosome.

This protein is essential to promote the specific transfer of the plasmid in the presence of conjugative plasmids. This is Mobilization protein C (mobC) from Escherichia coli.